The chain runs to 542 residues: Trans-alpha-bergamotene synthase (542 aa).

Residues Asp295, Asp299, Asp439, Thr443, and Glu447 each coordinate Mg(2+). A DDXXD motif motif is present at residues 295–299 (DDFYD).

It belongs to the terpene synthase family. The cofactor is Mg(2+).

It catalyses the reaction (2E,6E)-farnesyl diphosphate = (1S,5S,6R)-alpha-bergamotene + diphosphate. Its pathway is secondary metabolite biosynthesis; terpenoid biosynthesis. In terms of biological role, sesquiterpene synthase converting farnesyl diphosphate to trans-alpha-bergamotene as the major product. This chain is Trans-alpha-bergamotene synthase, found in Phyla dulcis (Aztec sweet herb).